We begin with the raw amino-acid sequence, 234 residues long: Glucosamine-6-phosphate deaminase (234 aa).

The active-site Proton acceptor; for enolization step is the Asp-62. Catalysis depends on Asn-128, which acts as the For ring-opening step. The Proton acceptor; for ring-opening step role is filled by His-130. Glu-135 functions as the For ring-opening step in the catalytic mechanism.

It belongs to the glucosamine/galactosamine-6-phosphate isomerase family. NagB subfamily.

The catalysed reaction is alpha-D-glucosamine 6-phosphate + H2O = beta-D-fructose 6-phosphate + NH4(+). The protein operates within amino-sugar metabolism; N-acetylneuraminate degradation; D-fructose 6-phosphate from N-acetylneuraminate: step 5/5. Functionally, catalyzes the reversible isomerization-deamination of glucosamine 6-phosphate (GlcN6P) to form fructose 6-phosphate (Fru6P) and ammonium ion. The chain is Glucosamine-6-phosphate deaminase from Streptococcus pyogenes serotype M18 (strain MGAS8232).